We begin with the raw amino-acid sequence, 221 residues long: uncharacterized protein (221 aa).

The interval M1–R22 is disordered. Residues T7–A16 are compositionally biased toward polar residues.

Belongs to the IIV-6 259R family.

This is an uncharacterized protein from Invertebrate iridescent virus 3 (IIV-3).